Consider the following 456-residue polypeptide: tRNA (guanine(37)-N(1))-methyltransferase (456 aa).

S-adenosyl-L-methionine is bound by residues His246, 284 to 285 (DL), 310 to 311 (DG), and Asn336.

Belongs to the class I-like SAM-binding methyltransferase superfamily. TRM5/TYW2 family. As to quaternary structure, monomer.

The protein localises to the mitochondrion matrix. It localises to the nucleus. Its subcellular location is the cytoplasm. The catalysed reaction is guanosine(37) in tRNA + S-adenosyl-L-methionine = N(1)-methylguanosine(37) in tRNA + S-adenosyl-L-homocysteine + H(+). Specifically methylates the N1 position of guanosine-37 in various cytoplasmic and mitochondrial tRNAs. Methylation is not dependent on the nature of the nucleoside 5' of the target nucleoside. This is the first step in the biosynthesis of wybutosine (yW), a modified base adjacent to the anticodon of tRNAs and required for accurate decoding. In Ciona intestinalis (Transparent sea squirt), this protein is tRNA (guanine(37)-N(1))-methyltransferase.